We begin with the raw amino-acid sequence, 329 residues long: Cytosolic Fe-S cluster assembly factor NBP35 (329 aa).

The disordered stretch occupies residues 1–33 (MAPSQVEDISKTELETPEHCPGPESEQAGKEDA). Residues 8-18 (DISKTELETPE) show a composition bias toward basic and acidic residues. Residues Cys-20, Cys-34, Cys-37, and Cys-43 each coordinate [4Fe-4S] cluster. Residue 74–81 (GKGGVGKS) participates in ATP binding. Residues Cys-248 and Cys-251 each coordinate [4Fe-4S] cluster.

This sequence belongs to the Mrp/NBP35 ATP-binding proteins family. NUBP1/NBP35 subfamily. Heterotetramer of 2 NBP35 and 2 CFD1 chains. It depends on [4Fe-4S] cluster as a cofactor.

The protein resides in the cytoplasm. It is found in the nucleus. In terms of biological role, component of the cytosolic iron-sulfur (Fe/S) protein assembly (CIA) machinery. Required for maturation of extramitochondrial Fe-S proteins. The NBP35-CFD1 heterotetramer forms a Fe-S scaffold complex, mediating the de novo assembly of an Fe-S cluster and its transfer to target apoproteins. Required for biogenesis and export of both ribosomal subunits, which may reflect a role in assembly of the Fe/S clusters in RLI1, a protein which performs rRNA processing and ribosome export. This Debaryomyces hansenii (strain ATCC 36239 / CBS 767 / BCRC 21394 / JCM 1990 / NBRC 0083 / IGC 2968) (Yeast) protein is Cytosolic Fe-S cluster assembly factor NBP35.